The primary structure comprises 70 residues: Large ribosomal subunit protein uL29 (70 aa).

Belongs to the universal ribosomal protein uL29 family.

In Prochlorococcus marinus (strain NATL1A), this protein is Large ribosomal subunit protein uL29.